The following is a 290-amino-acid chain: Glutamate 5-kinase (290 aa).

Position 21 (Lys-21) interacts with ATP. Substrate is bound by residues Ser-60, Asp-151, and Asn-163. 217 to 223 is an ATP binding site; it reads TGGMFTK.

This sequence belongs to the glutamate 5-kinase family.

The protein resides in the cytoplasm. It catalyses the reaction L-glutamate + ATP = L-glutamyl 5-phosphate + ADP. Its pathway is amino-acid biosynthesis; L-proline biosynthesis; L-glutamate 5-semialdehyde from L-glutamate: step 1/2. Functionally, catalyzes the transfer of a phosphate group to glutamate to form L-glutamate 5-phosphate. This chain is Glutamate 5-kinase, found in Leptospira interrogans serogroup Icterohaemorrhagiae serovar copenhageni (strain Fiocruz L1-130).